The sequence spans 235 residues: Phosphoribosylaminoimidazole-succinocarboxamide synthase (235 aa).

The protein belongs to the SAICAR synthetase family.

The enzyme catalyses 5-amino-1-(5-phospho-D-ribosyl)imidazole-4-carboxylate + L-aspartate + ATP = (2S)-2-[5-amino-1-(5-phospho-beta-D-ribosyl)imidazole-4-carboxamido]succinate + ADP + phosphate + 2 H(+). It participates in purine metabolism; IMP biosynthesis via de novo pathway; 5-amino-1-(5-phospho-D-ribosyl)imidazole-4-carboxamide from 5-amino-1-(5-phospho-D-ribosyl)imidazole-4-carboxylate: step 1/2. The chain is Phosphoribosylaminoimidazole-succinocarboxamide synthase from Clostridium perfringens (strain 13 / Type A).